The following is a 546-amino-acid chain: METSSTISIGSCLKEHQKIYKEWFNIADSDGDGRVSGNDATKFFAMSKLSRQELKQVWAVADSKRQGFLGLSEFITAMKLVSLAQEGHEITSDLLKGSIDMKSVELPVLEGLENVVSKQKVSKTNVDVEDNVVTKPQVTAKTPWFKSKSIIKPQVNVVTIVDGLKRLYTEKLKPLEVTYRFNDFASPVLTSSDFDAKPMVMLLGQYSTGKTTFIKHLLGCDYPGAHIGPEPTTDRFVVAMSGPDERTIPGNTMAVQADMPFNGLTSFGGAFLSKFECSQMPHPVLDQITLVDTPGVLSGEKQRMQRSYDFTGVISWFASKCDMILLLFDPHKLDISDEFKRVITSLRGNEDKIRVVLNKADQVDTQQLMRVYGALMWSLGKVLNTPEVVRVYIGSFNDKPINEVAVGPIGKELFEKEQNDLLADLMDVPKKACDRKINEFVKRARSAKINAYIMSHLKKEMPAMMGKSKAQQRLMDNLEEEFGKVQREFHLPAGDFPSVEHFREVLGGYNIDKFEKLKPKMIQAVDDMLGYDIPDLLKKFRNPYDN.

EF-hand domains are found at residues 15 to 50 (EHQK…SKLS) and 51 to 84 (RQEL…VSLA). The EH domain maps to 16-94 (HQKIYKEWFN…QEGHEITSDL (79 aa)). Positions 28, 30, 32, 34, 39, 62, and 73 each coordinate Ca(2+). A Dynamin-type G domain is found at 194–430 (FDAKPMVMLL…LLADLMDVPK (237 aa)). Residues 204–211 (GQYSTGKT) form a G1 motif region. 204 to 211 (GQYSTGKT) lines the GTP pocket. Residues 230–231 (EP) form a G2 motif region. The G3 motif stretch occupies residues 292–295 (DTPG). GTP contacts are provided by residues 292 to 296 (DTPGV) and lysine 359. The tract at residues 358 to 361 (NKAD) is G4 motif. A region of interest (G5 motif) is located at residue valine 382. 395–398 (SFND) contributes to the GTP binding site. The short motif at 429-436 (PKKACDRK) is the Nuclear localization signal element. Residues 467 to 490 (KSKAQQRLMDNLEEEFGKVQREFH) adopt a coiled-coil conformation.

Belongs to the TRAFAC class dynamin-like GTPase superfamily. Dynamin/Fzo/YdjA family. EHD subfamily. As to quaternary structure, homooligomer, and heterooligomer with EHD1. Interacts with AP-4 complex subunit sigma (At2g19790).

Its subcellular location is the endosome membrane. It localises to the cell membrane. The protein localises to the nucleus. It is found in the cytoplasm. The catalysed reaction is GTP + H2O = GDP + phosphate + H(+). Functionally, involved in endocytosis negative regulation, probably by influencing actin organization. Acts in early endocytic membrane fusion and membrane trafficking of recycling endosomes. Exhibits an inhibitory effect on endocytosis when over-expressed. In Arabidopsis thaliana (Mouse-ear cress), this protein is EH domain-containing protein 2.